We begin with the raw amino-acid sequence, 478 residues long: Probable cytosolic Fe-S cluster assembly factor AGAP009023 (478 aa).

[4Fe-4S] cluster contacts are provided by Cys-23, Cys-69, Cys-72, Cys-75, Cys-189, Cys-245, Cys-396, and Cys-400.

Belongs to the NARF family.

In terms of biological role, component of the cytosolic iron-sulfur (Fe/S) protein assembly machinery. Required for maturation of extramitochondrial Fe/S proteins. The sequence is that of Probable cytosolic Fe-S cluster assembly factor AGAP009023 from Anopheles gambiae (African malaria mosquito).